Consider the following 235-residue polypeptide: Golgi to ER traffic protein 1 (235 aa).

M1 is a topological domain (lumenal). A helical transmembrane segment spans residues 2–21 (HWAAAVAIFFIVVTKFLQYT). Topologically, residues 22–104 (NKYHEKWISK…AFQAHLHKLR (83 aa)) are cytoplasmic. A coiled-coil region spans residues 68 to 104 (WTKNNRKLDSLDKEINNLKDEIQSENKAFQAHLHKLR). The helical transmembrane segment at 105-125 (LLALTVPFFVFKIMYGKTPVY) threads the bilayer. Topologically, residues 126 to 181 (KLSSSTSTLFPTFVSGVWSQGWLYVLLHPLRTISQKWHIMEGKFGASKFDDMALQS) are lumenal. Residues 182 to 198 (VSLGIWVWALMNVINGV) traverse the membrane as a helical segment. Residues 199 to 235 (EFIVKQLFLTPKMEAPASVETQEEKALDAVDDAIILD) are Cytoplasmic-facing.

The protein belongs to the WRB/GET1 family. Component of the Golgi to ER traffic (GET) complex, which is composed of GET1, GET2 and GET3. Within the complex, GET1 and GET2 form a heterotetramer which is stabilized by phosphatidylinositol binding and which binds to the GET3 homodimer.

It is found in the endoplasmic reticulum membrane. Its subcellular location is the golgi apparatus membrane. In terms of biological role, required for the post-translational delivery of tail-anchored (TA) proteins to the endoplasmic reticulum. Together with GET2, acts as a membrane receptor for soluble GET3, which recognizes and selectively binds the transmembrane domain of TA proteins in the cytosol. The GET complex cooperates with the HDEL receptor ERD2 to mediate the ATP-dependent retrieval of resident ER proteins that contain a C-terminal H-D-E-L retention signal from the Golgi to the ER. This is Golgi to ER traffic protein 1 from Saccharomyces cerevisiae (strain RM11-1a) (Baker's yeast).